The primary structure comprises 505 residues: Betaine aldehyde dehydrogenase 1 (505 aa).

A betaine aldehyde-binding site is contributed by 163–172 (WNYPLLMATW). 240 to 245 (GSTETG) is an NAD(+) binding site. Betaine aldehyde contacts are provided by residues Glu-262, 294–297 (QVCS), and Cys-455. Active-site residues include Glu-262 and Cys-296. Residues 262-263 (EL) and Cys-296 each bind 4-aminobutanal. Trp-461 lines the 4-aminobutanal pocket. The Microbody targeting signal motif lies at 503–505 (SKL).

This sequence belongs to the aldehyde dehydrogenase family. Homodimer.

It localises to the peroxisome. It carries out the reaction betaine aldehyde + NAD(+) + H2O = glycine betaine + NADH + 2 H(+). It participates in amine and polyamine biosynthesis; betaine biosynthesis via choline pathway; betaine from betaine aldehyde: step 1/1. Functionally, dehydrogenase that can use N-acetyl-gamma-aminobutyraldehyde (NAGABald), gamma-guanidinobutyraldehyde (GGBald), betaine aldehyde (Bet-ald), gamma-aminobutyraldehyde (GAB-ald), acetaldehyde, 4-aminobutylaldehyde (AB-ald), 3-aminopropionaldehyde (AP-ald), 4-N-trimethylaminobutyraldehyde (TMAB-ald) and 3-N-trimethylaminopropionaldehyde (TMAP-ald) as substrates. Catalyzes the oxidation of GAB-ald more efficiently than Bet-ald. May convert acetaldehyde into acetate, thus facilitating the production of acetyl-CoA in peroxisomes under anaerobic conditions. The sequence is that of Betaine aldehyde dehydrogenase 1 (BADH1) from Oryza sativa subsp. japonica (Rice).